The primary structure comprises 358 residues: NADH-quinone oxidoreductase subunit H (358 aa).

8 consecutive transmembrane segments (helical) span residues 20 to 40, 95 to 115, 128 to 148, 168 to 188, 206 to 226, 253 to 273, 290 to 310, and 334 to 354; these read ITVG…IPLI, ALFY…WAVI, IGLL…IIAG, ISYE…SGSM, VFSW…ISAV, GFAF…ISAL, WGFI…AVLY, and VLIP…ISPL.

It belongs to the complex I subunit 1 family. NDH-1 is composed of 14 different subunits. Subunits NuoA, H, J, K, L, M, N constitute the membrane sector of the complex.

Its subcellular location is the cell inner membrane. The enzyme catalyses a quinone + NADH + 5 H(+)(in) = a quinol + NAD(+) + 4 H(+)(out). Functionally, NDH-1 shuttles electrons from NADH, via FMN and iron-sulfur (Fe-S) centers, to quinones in the respiratory chain. The immediate electron acceptor for the enzyme in this species is believed to be ubiquinone. Couples the redox reaction to proton translocation (for every two electrons transferred, four hydrogen ions are translocated across the cytoplasmic membrane), and thus conserves the redox energy in a proton gradient. This subunit may bind ubiquinone. This Neisseria meningitidis serogroup A / serotype 4A (strain DSM 15465 / Z2491) protein is NADH-quinone oxidoreductase subunit H.